Consider the following 644-residue polypeptide: uncharacterized protein (644 aa).

Residues 65–117 (DSDVETTGGGGRGSTTSTEDRIDEHDDAIEDDGVSNEEDENQDAEQEQEVDLN) are disordered. The segment covering 89 to 114 (HDDAIEDDGVSNEEDENQDAEQEQEV) has biased composition (acidic residues).

This is an uncharacterized protein from Arabidopsis thaliana (Mouse-ear cress).